Reading from the N-terminus, the 200-residue chain is uncharacterized protein (200 aa).

This is an uncharacterized protein from Xylella fastidiosa (strain 9a5c).